Reading from the N-terminus, the 159-residue chain is U-actitoxin-Avd13b (159 aa).

The N-terminal stretch at 1 to 18 (MKSIFLVFFAVCLVKAEA) is a signal peptide. Positions 19–26 (GKGRKREP) are excised as a propeptide. 2 cysteine pairs are disulfide-bonded: C33-C45 and C36-C52. The propeptide occupies 59-60 (EP). 2 disulfides stabilise this stretch: C67–C79 and C70–C86. Residues 93–94 (EP) constitute a propeptide that is removed on maturation. Intrachain disulfides connect C101-C113 and C104-C120. The propeptide occupies 127–128 (EP). Cystine bridges form between C135–C147 and C138–C154.

Belongs to the sea anemone BBH family.

The protein resides in the secreted. It localises to the nematocyst. In terms of biological role, inhibits ion channels. The sequence is that of U-actitoxin-Avd13b from Anemonia viridis (Snakelocks anemone).